The primary structure comprises 236 residues: Probable metal transport system ATP-binding protein CT_416 (236 aa).

An ABC transporter domain is found at 5-236 (MLLENVSFRY…FCCNTFGRCP (232 aa)). 39–46 (GPNGGGKT) lines the ATP pocket.

This sequence belongs to the ABC transporter superfamily.

It localises to the cell inner membrane. Functionally, part of an ATP-driven transport system CT_415/CT_416/CT_417 for a metal. Probably responsible for energy coupling to the transport system. The polypeptide is Probable metal transport system ATP-binding protein CT_416 (Chlamydia trachomatis serovar D (strain ATCC VR-885 / DSM 19411 / UW-3/Cx)).